A 211-amino-acid chain; its full sequence is Small ribosomal subunit protein uS5 (211 aa).

An S5 DRBM domain is found at 51–114 (LKHEVLDVSL…ANAKLNITPV (64 aa)).

The protein belongs to the universal ribosomal protein uS5 family. Part of the 30S ribosomal subunit. Contacts protein S4.

With S4 and S12 plays an important role in translational accuracy. In Ignicoccus hospitalis (strain KIN4/I / DSM 18386 / JCM 14125), this protein is Small ribosomal subunit protein uS5.